A 545-amino-acid polypeptide reads, in one-letter code: Chaperonin GroEL (545 aa).

ATP-binding positions include 29 to 32 (TLGP), K50, 86 to 90 (DGTTT), G413, and D495.

It belongs to the chaperonin (HSP60) family. Forms a cylinder of 14 subunits composed of two heptameric rings stacked back-to-back. Interacts with the co-chaperonin GroES.

Its subcellular location is the cytoplasm. It catalyses the reaction ATP + H2O + a folded polypeptide = ADP + phosphate + an unfolded polypeptide.. Functionally, together with its co-chaperonin GroES, plays an essential role in assisting protein folding. The GroEL-GroES system forms a nano-cage that allows encapsulation of the non-native substrate proteins and provides a physical environment optimized to promote and accelerate protein folding. This chain is Chaperonin GroEL, found in Borrelia garinii subsp. bavariensis (strain ATCC BAA-2496 / DSM 23469 / PBi) (Borreliella bavariensis).